Consider the following 429-residue polypeptide: Neuronal pentraxin-2 (429 aa).

The signal sequence occupies residues 1 to 14 (MLALLTVGVALAVA). Residues Asn-146 and Asn-187 are each glycosylated (N-linked (GlcNAc...) asparagine). The Pentraxin (PTX) domain occupies 221-422 (DAFKVSLPLR…GASKWPVETC (202 aa)). Cys-251 and Cys-311 are disulfide-bonded. Residues Asn-275, Glu-353, Gln-354, Asp-355, and Gln-365 each coordinate Ca(2+). N-linked (GlcNAc...) asparagine glycosylation occurs at Asn-391.

In terms of assembly, homooligomer or heterooligomer (probably pentamer) with neuronal pentraxin receptor (NPTXR). The cofactor is Ca(2+).

The protein localises to the secreted. Its function is as follows. Likely to play role in the modification of cellular properties that underlie long-term plasticity. Binds to agar matrix in a calcium-dependent manner. The chain is Neuronal pentraxin-2 (Nptx2) from Mus musculus (Mouse).